A 799-amino-acid chain; its full sequence is Phenylalanine--tRNA ligase beta subunit (799 aa).

Positions 39–150 (GKGFSGVIVG…EHLQAGTALN (112 aa)) constitute a tRNA-binding domain. Positions 402–478 (FLELTIRCRL…RIYGYDHIPR (77 aa)) constitute a B5 domain. Mg(2+) contacts are provided by Asp456, Asp462, Glu465, and Glu466. The 94-residue stretch at 705-798 (AIYPGSERDW…VSQKFANDLK (94 aa)) folds into the FDX-ACB domain.

This sequence belongs to the phenylalanyl-tRNA synthetase beta subunit family. Type 1 subfamily. In terms of assembly, tetramer of two alpha and two beta subunits. It depends on Mg(2+) as a cofactor.

It is found in the cytoplasm. The enzyme catalyses tRNA(Phe) + L-phenylalanine + ATP = L-phenylalanyl-tRNA(Phe) + AMP + diphosphate + H(+). This chain is Phenylalanine--tRNA ligase beta subunit, found in Protochlamydia amoebophila (strain UWE25).